Reading from the N-terminus, the 872-residue chain is Metabotropic glutamate receptor 2 (872 aa).

The N-terminal stretch at Met1 to Ala18 is a signal peptide. The Extracellular portion of the chain corresponds to Glu19–Trp567. A disulfide bridge links Cys50 with Cys92. Positions 57, 61, 145, 166, and 168 each coordinate L-glutamate. Residues Asn203 and Asn286 are each glycosylated (N-linked (GlcNAc...) asparagine). 7 cysteine pairs are disulfide-bonded: Cys234–Cys518, Cys355–Cys362, Cys400–Cys407, Cys500–Cys519, Cys504–Cys522, Cys525–Cys537, and Cys540–Cys553. Residue Asp295 coordinates L-glutamate. A glycan (N-linked (GlcNAc...) asparagine) is linked at Asn338. Lys377 lines the L-glutamate pocket. An N-linked (GlcNAc...) asparagine glycan is attached at Asn402. An N-linked (GlcNAc...) asparagine glycan is attached at Asn547. Residues Ala568 to Val590 form a helical membrane-spanning segment. Residues Arg591–Glu604 lie on the Cytoplasmic side of the membrane. Residues Leu605–Ala625 traverse the membrane as a helical segment. The Extracellular portion of the chain corresponds to Lys626–Arg636. Cys632 and Cys721 are joined by a disulfide. A helical transmembrane segment spans residues Leu637–Asn655. Over Arg656 to Gln679 the chain is Cytoplasmic. An important for interaction with HTR2A region spans residues Ala677 to Ala685. Residues Val680 to Val700 traverse the membrane as a helical segment. At Glu701–Asp725 the chain is on the extracellular side. A helical membrane pass occupies residues Ala726–Phe747. The Cytoplasmic segment spans residues Lys748 to Lys760. The helical transmembrane segment at Phe761–Thr783 threads the bilayer. Over Ser784–Thr793 the chain is Extracellular. The helical transmembrane segment at Met794–Phe819 threads the bilayer. The Cytoplasmic segment spans residues Gln820–Leu872.

This sequence belongs to the G-protein coupled receptor 3 family. As to quaternary structure, forms heterodimers with GRM3 or GRM4. Interacts with GNAI1. Interacts with TAMALIN. Interacts with HTR2A. In terms of tissue distribution, is widely distributed in the CNS and prominent expression is seen in Golgi cells of the cerebellum and some particular neuronal cells in other brain regions.

The protein localises to the cell membrane. The protein resides in the synapse. Its subcellular location is the cell projection. It is found in the dendrite. Its function is as follows. Dimeric G protein-coupled receptor which is activated by the excitatory neurotransmitter L-glutamate. Plays critical roles in modulating synaptic transmission and neuronal excitability. Upon activation by glutamate, inhibits presynaptic calcium channels, reducing further glutamate release and dampening excitatory signaling. Mechanistically, ligand binding causes a conformation change that triggers signaling via guanine nucleotide-binding proteins (G proteins) and modulates the activity of down-stream effectors, such as adenylate cyclase. May mediate suppression of neurotransmission or may be involved in synaptogenesis or synaptic stabilization. The polypeptide is Metabotropic glutamate receptor 2 (Grm2) (Rattus norvegicus (Rat)).